The sequence spans 61 residues: Probable tautomerase BA_5626/GBAA_5626/BAS5226 (61 aa).

Pro2 acts as the Proton acceptor; via imino nitrogen in catalysis.

Belongs to the 4-oxalocrotonate tautomerase family.

This Bacillus anthracis protein is Probable tautomerase BA_5626/GBAA_5626/BAS5226.